The chain runs to 380 residues: Cytochrome b (380 aa).

The next 4 membrane-spanning stretches (helical) occupy residues 33 to 53 (FGSLLGLCLATQILTGLFLAM), 77 to 98 (WLIRNIHANGASFFFICIYMHI), 113 to 133 (WNIGVVLLLLTMMTAFVGYVL), and 178 to 198 (FFAFHFLFPFVIAAATVLHLL). The heme b site is built by H83 and H97. 2 residues coordinate heme b: H182 and H196. Position 201 (H201) interacts with a ubiquinone. 4 helical membrane-spanning segments follow: residues 226–246 (YKDLLGFVAMLLGLTSLALFA), 288–308 (LGGVLALLFSILVLMVVPILH), 320–340 (LTQFLFWALVADMLILTWIGG), and 347–367 (FIIIGQVASVIYFTIFLVLSP).

This sequence belongs to the cytochrome b family. As to quaternary structure, the cytochrome bc1 complex contains 3 respiratory subunits (MT-CYB, CYC1 and UQCRFS1), 2 core proteins (UQCRC1 and UQCRC2) and probably 6 low-molecular weight proteins. Heme b is required as a cofactor.

It is found in the mitochondrion inner membrane. Component of the ubiquinol-cytochrome c reductase complex (complex III or cytochrome b-c1 complex) that is part of the mitochondrial respiratory chain. The b-c1 complex mediates electron transfer from ubiquinol to cytochrome c. Contributes to the generation of a proton gradient across the mitochondrial membrane that is then used for ATP synthesis. The chain is Cytochrome b (mt-cyb) from Oncorhynchus mykiss (Rainbow trout).